We begin with the raw amino-acid sequence, 1274 residues long: Mediator of RNA polymerase II transcription subunit 14 (1274 aa).

3 disordered regions span residues 1–40, 1056–1142, and 1155–1274; these read MENGHMNGVRTHHDRNSWTNGVNGGVAKREGSPDKGKAHA, LVGT…LHTQ, and AQRQ…VVID. A compositionally biased stretch (basic and acidic residues) spans 27 to 37; sequence AKREGSPDKGK. Over residues 1075-1085 the composition is skewed to polar residues; that stretch reads QDLQQGPQKTP. Low complexity predominate over residues 1090 to 1104; sequence AAQAAQAAQAAQAAQ. Positions 1108-1119 are enriched in pro residues; the sequence is PQRPKQQPPTPS. Composition is skewed to low complexity over residues 1120–1142, 1155–1172, and 1183–1252; these read QPQQQHRNVNQPQAQAQPQLHTQ, AQRQAQARANNSSNNNNT, and PQQR…PQGQ. Residues 1253 to 1265 show a composition bias toward gly residues; the sequence is PGHGGGANGGMGG.

It belongs to the Mediator complex subunit 14 family. As to quaternary structure, component of the Mediator complex.

It localises to the nucleus. Functionally, component of the Mediator complex, a coactivator involved in the regulated transcription of nearly all RNA polymerase II-dependent genes. Mediator functions as a bridge to convey information from gene-specific regulatory proteins to the basal RNA polymerase II transcription machinery. Mediator is recruited to promoters by direct interactions with regulatory proteins and serves as a scaffold for the assembly of a functional preinitiation complex with RNA polymerase II and the general transcription factors. The chain is Mediator of RNA polymerase II transcription subunit 14 (rgr1) from Neurospora crassa (strain ATCC 24698 / 74-OR23-1A / CBS 708.71 / DSM 1257 / FGSC 987).